We begin with the raw amino-acid sequence, 465 residues long: Gamma-aminobutyric acid receptor subunit rho-2 (465 aa).

Positions 1-20 (MPYFTRLILFLFCLMVLVES) are cleaved as a signal peptide. Over 21 to 260 (RKPKRKRWTG…LYINFTLRRH (240 aa)) the chain is Extracellular. Residue Arg105 coordinates 4-aminobutanoate. Asn120 carries an N-linked (GlcNAc...) asparagine glycan. Residue Ser169 coordinates 4-aminobutanoate. Cys178 and Cys192 form a disulfide bridge. Glu197 contacts 4-aminobutanoate. A glycan (N-linked (GlcNAc...) asparagine) is linked at Asn254. A helical transmembrane segment spans residues 261-281 (IFFFLLQTYFPATLMVMLSWV). The Cytoplasmic segment spans residues 282–293 (SFWIDRRAVPAR). A helical membrane pass occupies residues 294-314 (VSLGITTVLTMTTIITGVNAS). Over 315-325 (MPRVSYVKAVD) the chain is Extracellular. The helical transmembrane segment at 326–346 (IYLWVSFVFVFLSVLEYAAVN) threads the bilayer. The Cytoplasmic portion of the chain corresponds to 347-443 (YLTTVQERKE…IFQNTHAIDK (97 aa)). A helical transmembrane segment spans residues 444-464 (YSRLIFPASYIFFNLIYWSVF). Residue Ser465 is a topological domain, extracellular.

This sequence belongs to the ligand-gated ion channel (TC 1.A.9) family. Gamma-aminobutyric acid receptor (TC 1.A.9.5) subfamily. GABRR2 sub-subfamily. In terms of assembly, three rho subunits (rho-1/GBRR1, rho-2/GBRR2 and rho-3/GBRR3) coassemble either to form functional homopentamers or heteropentamers. Rho-2 is unable to form a functional homopentamer. Interacts with SQSTM1.

The protein localises to the postsynaptic cell membrane. Its subcellular location is the cell membrane. The catalysed reaction is chloride(in) = chloride(out). Rho subunit of the pentameric ligand-gated chloride channels responsible for mediating the effects of gamma-aminobutyric acid (GABA), the major inhibitory neurotransmitter in the brain. Rho-containing GABA-gated chloride channels are a subclass of GABA(A) receptors (GABAARs) entirely composed of rho subunits, where GABA molecules bind at the rho intersubunit interfaces. When activated by GABA, rho-GABAARs selectively allow the flow of chloride anions across the cell membrane down their electrochemical gradient. Rho-2 GABAARs may contribute to the regulation of glial development in the cerebellum by controlling extrasynaptic transmission. Rho-2 GABAARs are also involved in neuronal tonic (extrasynaptic) and phasic (synaptic) transmission in the Purkinje neurons of the cerebellum. Rho-2 GABAARs expressed in retina may play a role in retinal neurotransmission. This is Gamma-aminobutyric acid receptor subunit rho-2 from Homo sapiens (Human).